The primary structure comprises 134 residues: Large ribosomal subunit protein uL18 (134 aa).

It belongs to the universal ribosomal protein uL18 family. As to quaternary structure, part of the 50S ribosomal subunit; part of the 5S rRNA/L5/L18/L25 subcomplex. Contacts the 5S and 23S rRNAs.

In terms of biological role, this is one of the proteins that bind and probably mediate the attachment of the 5S RNA into the large ribosomal subunit, where it forms part of the central protuberance. The chain is Large ribosomal subunit protein uL18 from Corynebacterium efficiens (strain DSM 44549 / YS-314 / AJ 12310 / JCM 11189 / NBRC 100395).